Here is a 360-residue protein sequence, read N- to C-terminus: Cinnamyl alcohol dehydrogenase 2 (360 aa).

The 329-residue stretch at 23–351 folds into the Enoyl reductase (ER) domain; it reads GVLSPFNFSR…KADVKYRFVI (329 aa). A Zn(2+)-binding site is contributed by Cys-50. Ser-52 is an an alcohol binding site. Ser-52 provides a ligand contact to NADP(+). Zn(2+)-binding residues include Asp-53, His-72, Glu-73, Cys-103, Cys-106, Cys-109, Cys-117, and Cys-166. His-72 is a binding site for an alcohol. 12 residues coordinate NADP(+): Leu-192, Gly-194, Leu-195, Ser-214, Thr-215, Ser-216, Lys-219, Lys-220, Val-277, Ala-279, Ser-301, and Arg-348.

This sequence belongs to the zinc-containing alcohol dehydrogenase family. Class-P subfamily. As to quaternary structure, homodimer. It depends on Zn(2+) as a cofactor. Mainly expressed in young roots and, to a lower extent, in stems and leaves.

The protein localises to the cytoplasm. It carries out the reaction (E)-cinnamyl alcohol + NADP(+) = (E)-cinnamaldehyde + NADPH + H(+). Its function is as follows. Alcohol dehydrogenase that catalyzes the conversion of (E)-cinnamyl alcohol to (E)-cinnamaldehyde. The chain is Cinnamyl alcohol dehydrogenase 2 from Rauvolfia serpentina (Serpentine wood).